A 347-amino-acid chain; its full sequence is tRNA N6-adenosine threonylcarbamoyltransferase (347 aa).

Fe cation is bound by residues H115 and H119. Substrate is bound by residues 137-141 (LASGG), D170, G183, and N281. D309 contacts Fe cation.

Belongs to the KAE1 / TsaD family. Fe(2+) is required as a cofactor.

Its subcellular location is the cytoplasm. It carries out the reaction L-threonylcarbamoyladenylate + adenosine(37) in tRNA = N(6)-L-threonylcarbamoyladenosine(37) in tRNA + AMP + H(+). Functionally, required for the formation of a threonylcarbamoyl group on adenosine at position 37 (t(6)A37) in tRNAs that read codons beginning with adenine. Is involved in the transfer of the threonylcarbamoyl moiety of threonylcarbamoyl-AMP (TC-AMP) to the N6 group of A37, together with TsaE and TsaB. TsaD likely plays a direct catalytic role in this reaction. This chain is tRNA N6-adenosine threonylcarbamoyltransferase, found in Methylorubrum populi (strain ATCC BAA-705 / NCIMB 13946 / BJ001) (Methylobacterium populi).